The sequence spans 446 residues: MGRKKIKIQRIPDERNRQVTFNKRKNGLIKKAMELALLCDSTVSLVIVNNSPNAKEKYFQYISSGLPSPMESIPDLGPEISQKFTDHDYDKIFNKKEKGDFNDDYIGGDTASHSEEEDHKSPSSTPELLGYNHHNHHHHHHQYNNNSNNNNNNHNNNHNNYNNSNNINGHNNHYNHNNLKLNSNNNNNNSQFNSSQHINKPILSIKPSQTQENHNHYNNYSSHLSNNNNNNNSSNNNNNSNNNNNNNNNNNTNNNNTNNNNNNNNNNNNNNNNNNNNNNNNNMSPIGSPPSKCQQVPAFDSTQATQALLSLHNASKLFCSSPEDTSPMTSPRTPPFSSTNTNTLQTSPNSQQKSKSLPPLIFNENNNQNNNNQNNNQNNNNNNSNNTNTNNNNQNNSSRSILLPPISLYNSNSNSNSSSTLTSPTSSSSNLNDDLFLKKRKLELIH.

An MADS-box domain is found at 1 to 61; sequence MGRKKIKIQR…PNAKEKYFQY (61 aa). 3 disordered regions span residues 95–195, 210–296, and 319–432; these read KKEK…FNSS, TQEN…CQQV, and CSSP…SNLN. Residues 112–121 show a composition bias toward basic and acidic residues; that stretch reads SHSEEEDHKS. Positions 133 to 142 are enriched in basic residues; sequence HHNHHHHHHQ. 2 stretches are compositionally biased toward low complexity: residues 143–195 and 216–282; these read YNNN…FNSS and HYNN…NNNN. Residues 322–355 show a composition bias toward polar residues; the sequence is PEDTSPMTSPRTPPFSSTNTNTLQTSPNSQQKSK. The segment covering 365-432 has biased composition (low complexity); the sequence is NNNQNNNNQN…SPTSSSSNLN (68 aa).

The protein resides in the nucleus. This chain is Serum factor response D (srfD), found in Dictyostelium discoideum (Social amoeba).